The primary structure comprises 285 residues: UPF0603 protein At1g54780, chloroplastic (285 aa).

Disordered regions lie at residues Met-1 to Arg-48 and Gly-228 to Glu-251. Residues His-22–Ser-40 are compositionally biased toward polar residues. The span at Lys-238 to Glu-251 shows a compositional bias: basic and acidic residues. Residues Phe-259–Phe-279 form a helical membrane-spanning segment.

The protein belongs to the UPF0603 family.

Its subcellular location is the plastid. The protein resides in the chloroplast thylakoid membrane. The protein is UPF0603 protein At1g54780, chloroplastic of Arabidopsis thaliana (Mouse-ear cress).